Consider the following 122-residue polypeptide: Nuclear transport factor 2A (122 aa).

At methionine 1 the chain carries N-acetylmethionine. Residues 6–119 (VAKAFVEHYY…YYVFNDIFRL (114 aa)) enclose the NTF2 domain.

Interacts with RAN1. As to expression, expressed in roots, stems, leaves and flowers, and, at low levels, in siliques.

Its subcellular location is the cytoplasm. It localises to the nucleus. The protein localises to the nucleus envelope. Facilitates protein transport into the nucleus. Interacts with various nucleoporins and with Ran-GDP. Could be part of a multicomponent system of cytosolic factors that assemble at the pore complex during nuclear import. The protein is Nuclear transport factor 2A of Arabidopsis thaliana (Mouse-ear cress).